The primary structure comprises 340 residues: Deubiquitinase SseL (340 aa).

H223 is a catalytic residue. The active-site Nucleophile is the C285.

This sequence belongs to the peptidase C79 family.

Its subcellular location is the secreted. The protein resides in the host cytoplasm. Effector proteins function to alter host cell physiology and promote bacterial survival in host tissues. This protease targets the host cell ubiquitin pathway by acting as a deubiquitinase in infected host cells. In Salmonella choleraesuis (strain SC-B67), this protein is Deubiquitinase SseL (sseL).